Here is a 240-residue protein sequence, read N- to C-terminus: Probable transcriptional regulatory protein jhp_0149 (240 aa).

This sequence belongs to the TACO1 family.

It localises to the cytoplasm. This is Probable transcriptional regulatory protein jhp_0149 from Helicobacter pylori (strain J99 / ATCC 700824) (Campylobacter pylori J99).